A 358-amino-acid chain; its full sequence is Peptide chain release factor 1 (358 aa).

At glutamine 233 the chain carries N5-methylglutamine.

Belongs to the prokaryotic/mitochondrial release factor family. Post-translationally, methylated by PrmC. Methylation increases the termination efficiency of RF1.

It localises to the cytoplasm. Functionally, peptide chain release factor 1 directs the termination of translation in response to the peptide chain termination codons UAG and UAA. This is Peptide chain release factor 1 from Staphylococcus haemolyticus (strain JCSC1435).